Consider the following 190-residue polypeptide: MIICVVGMPGSGKGQIVRIFGKYGIPHVSMGDIVREEADRRGVPRTPEGMNSVSIQLRQELGDNAVAKLAIPKVRELLKTHEAVIIEGVRSLDEIQAFKDAFPEEKVIIIAVHSSPQKRFERLSKRGRSDDPKSWSEFEARDWKELKFGLGNVIALADYLIVNESHLTQYRRKIERLAERLGIKKKYFTF.

7-14 contacts ATP; the sequence is GMPGSGKG.

Belongs to the UPF0200 family.

This chain is UPF0200 protein TSIB_0920, found in Thermococcus sibiricus (strain DSM 12597 / MM 739).